The sequence spans 983 residues: MEKSVAETENGDAFLELKKLPTSKSPHRYTKEELLDIKERPYSKQRPSCLSEKYDSDGVWDPEKWHASLYPASGRSSPVESLKKESESDRPSLVRRIADPRERVKEDDLDVVLSPQRRSFGGGCHVTAAVSSRRSGSPLEKDSDGLRLLGGRRIGSGRIISARAFEKDHRLSDKDLRDLRDRDRERDYKDKRFRREFGDSKRVFGERRRNDSYTEEEPEWFSAGPTSQSETIELTGFDDKILEEDHKGRKRTRRRTASVKEGIVECNGGVAEEDEVEVILAQEPSADQEVPRDVILPEQSPGEFDFNEFFNLDKVPCLASMIEDVLGEGSVSASRFSRWFSNPSRSGSRSSSLGSTPHEELERLAGLEQAVLSPGQNSGNYFAPIPSEDHAENKVDILEMLQKAKVDLKPLLSSLSANKEKLKESSHSGVVLSVEEVEAGLKGLKVDQQMKNSTPFMAEHLEETLSAASSNRQLKKDGDMTAFNKLVNTMKASGTLPTQPKVSRNVESHLLAPAEIPGQPVSKNILQELLGQPVQRPASSNLLSGLMGSLEATASLLSQRAPSPPMSQVFRTQAASADYLHPRIPSPIGFPSGPQQLLGDPFQGMRKPMSPVSAQMSQLELQQAALEGLALPHDLAVQTAPFYQPGFSKPQVDRTRDGLRNRQQRMSKSPAPMHGGNSSSPAPAASITSMLSPSFTPTSVIRKMYESREKTKEEMAPGMVVPGDGKEDTQKTSEENLLSSNPIPNTDQDSSTTNPKLSTLQRSSCSTPLSQTSRYTKEQDYRPKTAGRKTPTLASPVPGTPFLRPTHQVPLVPHVPIVRPAHQLHPGLVQRLIAQGVHPQHLPSLLQAGVLPPGIDMAPLQGLSGPLLGQPLYPLVSAASHPLLNPRPGTPLHLAVMQQQLQRSVLHPPGSSSQAAAISVQTPQNVPSRSGMPHMHSQLEHRTSQRSSSPVGLAKWFGSDVLQQPLPSMPTKVISVDELEYRQ.

The disordered stretch occupies residues 1-22 (MEKSVAETENGDAFLELKKLPT). The residue at position 4 (S4) is a Phosphoserine. Positions 29-35 (YTKEELL) match the YXXXXLphi motif motif. Residues 40–99 (RPYSKQRPSCLSEKYDSDGVWDPEKWHASLYPASGRSSPVESLKKESESDRPSLVRRIAD) form a disordered region. The segment covering 52–66 (EKYDSDGVWDPEKWH) has biased composition (basic and acidic residues). S73 and S77 each carry phosphoserine. The span at 81–99 (SLKKESESDRPSLVRRIAD) shows a compositional bias: basic and acidic residues. S114, S119, S135, and S137 each carry phosphoserine. An interaction with CSDE1 region spans residues 130–160 (VSSRRSGSPLEKDSDGLRLLGGRRIGSGRII). A Nuclear localization signal motif is present at residues 194–210 (RREFGDSKRVFGERRRN). The tract at residues 206 to 229 (ERRRNDSYTEEEPEWFSAGPTSQS) is disordered. Residues 218–239 (PEWFSAGPTSQSETIELTGFDD) are interaction with DDX6. 4 positions are modified to phosphoserine: S300, S344, S352, and S373. The tract at residues 341–360 (SNPSRSGSRSSSLGSTPHEE) is disordered. A compositionally biased stretch (low complexity) spans 344-355 (SRSGSRSSSLGS). K409 is covalently cross-linked (Glycyl lysine isopeptide (Lys-Gly) (interchain with G-Cter in SUMO2)). S416 carries the post-translational modification Phosphoserine. Residues 437 to 446 (VEAGLKGLKV) carry the Nuclear export signal motif. The segment at 447 to 489 (DQQMKNSTPFMAEHLEETLSAASSNRQLKKDGDMTAFNKLVNT) is interaction with LSM14A. At K485 the chain carries N6-acetyllysine. 2 positions are modified to phosphoserine: S563 and S586. Disordered regions lie at residues 585 to 616 (PSPI…SAQM), 642 to 693 (FYQP…MLSP), 708 to 800 (REKT…VPGT), and 906 to 951 (LHPP…SSPV). The Nuclear export signal motif lies at 612-637 (VSAQMSQLELQQAALEGLALPHDLAV). Residues 651–660 (QVDRTRDGLR) are compositionally biased toward basic and acidic residues. Residue S692 is modified to Phosphoserine. Positions 694 to 712 (SFTPTSVIRKMYESREKTK) are interaction with PATL1. Residues 724 to 734 (DGKEDTQKTSE) show a composition bias toward basic and acidic residues. Polar residues-rich tracts occupy residues 735–774 (ENLL…QTSR) and 910–928 (GSSS…NVPS). Residues S751, S919, and S949 each carry the phosphoserine modification. The interval 938 to 983 (QLEHRTSQRSSSPVGLAKWFGSDVLQQPLPSMPTKVISVDELEYRQ) is interaction with LSM14A.

This sequence belongs to the 4E-T/EIF4E-T family. In terms of assembly, interacts (via YXXXXLphi motif) with EIF4E. Interacts (via YXXXXLphi motif) with EIF4E2. Interacts with DDX6. Interacts with CSDE1/UNR. Interacts with CNOT1; promoting association with the CCR4-NOT complex. Interacts with LSM14A; promoting EIF4ENIF1 localization to P-bodies. Interacts with PATL1. Interacts with importin beta only in the presence of importin alpha, suggesting a direct interaction with importin alpha. Interacts with APOBEC3G in an RNA-dependent manner. Phosphorylation by MAPK8/JNK1 and or MAPK9/JNK2 in response to oxidative stress promotes P-body assembly. Phosphorylated during meiotic maturation. Highly expressed in developing oocytes.

The protein localises to the cytoplasm. It localises to the nucleus. Its subcellular location is the PML body. The protein resides in the nucleus speckle. In terms of biological role, EIF4E-binding protein that regulates translation and stability of mRNAs in processing bodies (P-bodies). Plays a key role in P-bodies to coordinate the storage of translationally inactive mRNAs in the cytoplasm and prevent their degradation. Acts as a binding platform for multiple RNA-binding proteins: promotes deadenylation of mRNAs via its interaction with the CCR4-NOT complex, and blocks decapping via interaction with eIF4E (EIF4E and EIF4E2), thereby protecting deadenylated and repressed mRNAs from degradation. Component of a multiprotein complex that sequesters and represses translation of proneurogenic factors during neurogenesis. Promotes miRNA-mediated translational repression. Involved in mRNA translational repression mediated by the miRNA effector TNRC6B by protecting TNRC6B-targeted mRNAs from decapping and subsequent decay. Required for the formation of P-bodies. Also acts as a nucleoplasmic shuttling protein, which mediates the nuclear import of EIF4E and DDX6 by a piggy-back mechanism. The polypeptide is Eukaryotic translation initiation factor 4E transporter (Mus musculus (Mouse)).